The primary structure comprises 218 residues: Molybdenum cofactor guanylyltransferase (218 aa).

Residues 16–18 (LAG), Lys-28, Asn-56, Asp-74, and Asp-109 each bind GTP. Asp-109 contributes to the Mg(2+) binding site.

Belongs to the MobA family. In terms of assembly, monomer. Mg(2+) is required as a cofactor.

Its subcellular location is the cytoplasm. It catalyses the reaction Mo-molybdopterin + GTP + H(+) = Mo-molybdopterin guanine dinucleotide + diphosphate. Transfers a GMP moiety from GTP to Mo-molybdopterin (Mo-MPT) cofactor (Moco or molybdenum cofactor) to form Mo-molybdopterin guanine dinucleotide (Mo-MGD) cofactor. The sequence is that of Molybdenum cofactor guanylyltransferase from Sinorhizobium fredii (strain NBRC 101917 / NGR234).